Reading from the N-terminus, the 479-residue chain is DNA polymerase IV (479 aa).

Positions 7–189 constitute a UmuC domain; it reads ILHLDMDAFF…MTVRTLPGVG (183 aa). Mg(2+) contacts are provided by D11 and D105. E106 is an active-site residue. Disordered regions lie at residues 357–400 and 430–479; these read AGDR…GHGW and DPEL…TSRP. Basic and acidic residues predominate over residues 381 to 396; it reads AERRWPSGHDVRHTEL.

This sequence belongs to the DNA polymerase type-Y family. Monomer. Requires Mg(2+) as cofactor.

The protein localises to the cytoplasm. The enzyme catalyses DNA(n) + a 2'-deoxyribonucleoside 5'-triphosphate = DNA(n+1) + diphosphate. In terms of biological role, poorly processive, error-prone DNA polymerase involved in untargeted mutagenesis. Copies undamaged DNA at stalled replication forks, which arise in vivo from mismatched or misaligned primer ends. These misaligned primers can be extended by PolIV. Exhibits no 3'-5' exonuclease (proofreading) activity. May be involved in translesional synthesis, in conjunction with the beta clamp from PolIII. This is DNA polymerase IV from Streptomyces coelicolor (strain ATCC BAA-471 / A3(2) / M145).